A 717-amino-acid polypeptide reads, in one-letter code: Protein E2 homolog (717 aa).

It belongs to the poxviridae E2 protein family.

This is Protein E2 homolog from Fowlpox virus (strain NVSL) (FPV).